The following is a 568-amino-acid chain: TNF receptor-associated factor 3 (568 aa).

Residues 1 to 28 (MESSKKMDSPGALQTNPPLKLHTDRSAG) are disordered. Ser-9 is subject to Phosphoserine. Cys-56 is covalently cross-linked (Glycyl cysteine thioester (Cys-Gly) (interchain with G-Cter in ubiquitin)). Residues 68–77 (CGHRFCESCM) form an RING-type zinc finger. Residue Cys-124 forms a Glycyl cysteine thioester (Cys-Gly) (interchain with G-Cter in ubiquitin) linkage. TRAF-type zinc fingers lie at residues 135–190 (VHLK…IALQ) and 191–249 (KHED…QQIK). Lys-168 participates in a covalent cross-link: Glycyl lysine isopeptide (Lys-Gly) (interchain with G-Cter in ubiquitin). Residues 267–338 (SNSLEKKVSL…KLKELDKEIR (72 aa)) are a coiled coil. Lys-329 participates in a covalent cross-link: Glycyl lysine isopeptide (Lys-Gly) (interchain with G-Cter in ubiquitin). Residues 392-415 (LSVHDIRLADMDLRFQVLETASYN) form a (Microbial infection) Interaction with glycoprotein N of Andes and New York hantaviruses region. Residues 415-560 (NGVLIWKIRD…DDTIFIKVIV (146 aa)) enclose the MATH domain.

The protein belongs to the TNF receptor-associated factor family. A subfamily. As to quaternary structure, homotrimer. Heterotrimer with TRAF2 and TRAF5. Interacts with LTBR/TNFRSF3, TNFRSF4, TNFRSF5/CD40, TNFRSF8/CD30, TNFRSF13C TNFRSF17/BCMA, TLR4 and EDAR. Interacts with MAP3K5, MAP3K14, TRAIP/TRIP, TDP2/TTRAP, TANK/ITRAF and TRAF3IP1. Interaction with TNFRSF5/CD40 is modulated by TANK/ITRAF, which competes for the same binding site. Interacts with TICAM1. Interacts with TRAFD1. Interacts with OTUB1, OTUB2 and OTUD5. Interacts with RNF216, OPTN and TBK1. Identified in a complex with TRAF2, MAP3K14 and BIRC3. Interacts with BIRC2 and BIRC3. Upon exposure to bacterial lipopolysaccharide (LPS), recruited to a transient complex containing TLR4, TRAF3, TRAF6, IKBKG, MAP3K7, MYD88, TICAM1, BIRC2, BIRC3 and UBE2N. Interacts (via RING-type zinc finger domain) with SRC. Interacts with CARD14. Interacts (via MATH domain) with PTPN22; the interaction promotes TRAF3 polyubiquitination. Interacts with MAVS. Directly interacts with DDX3X; this interaction stimulates TRAF3 'Lys-63' ubiquitination. Interacts with IRF3. Interacts with IKBKE in the course of Sendai virus infection. Interacts with TRIM35. Interacts with GAPDH; promoting TRAF3 ubiquitination. Interacts with PPP3CA and PPP3CB. Interacts with ATP1B1; promoting TRAF3 ubiquitination. Interacts with RALGDS. Interacts with FBXO11. (Microbial infection) Interacts (via N-terminus) with New York hantavirus glycoprotein N (via C-terminus); this interaction inhibits the formation of TRAF3-TBK1 complexes. In terms of assembly, (Microbial infection) Interacts with Andes hantavirus glycoprotein N (via C-terminus); this interaction inhibits the formation of TRAF3-TBK1 complexes. As to quaternary structure, (Microbial infection) Interacts with Tula hantavirus glycoprotein N (via C-terminus); this interaction inhibits the formation of TRAF3-TBK1 complexes. (Microbial infection) Interacts with Epstein-Barr virus protein LMP1. In terms of processing, undergoes 'Lys-48'-linked polyubiquitination, leading to its proteasomal degradation in response to signaling by TNFSF13B, TLR4 or through CD40. 'Lys-48'-linked polyubiquitinated form is deubiquitinated by OTUD7B, preventing TRAF3 proteolysis and over-activation of non-canonical NF-kappa-B. Undergoes 'Lys-63'-linked ubiquitination during early stages of virus infection, and 'Lys-48'-linked ubiquitination during later stages. Undergoes both 'Lys-48'-linked and 'Lys-63'-linked ubiquitination in response to TLR3 and TLR4 signaling. 'Lys-63'-linked ubiquitination can be mediated by TRIM35. Deubiquitinated by OTUB1, OTUB2 and OTUD5. Undergoes 'Lys-63'-linked deubiquitination by MYSM1 to terminate the pattern-recognition receptors/PRRs pathways. Also undergoes 'Lys-29'-linked ubiquitination on Cys-56 and Cys-124 by NEDD4L; leading to increased 'Lys-48'- and 'Lys-63'-linked ubiquitination as well as increased binding to TBK1. TLR4 signals emanating from bacteria containing vesicles trigger 'Lys-33'-linked polyubiquitination that promotes the assembly of the exocyst complex thereby connecting innate immune signaling to the cellular trafficking apparatus. Deubiquitinated by USP25 during viral infection, leading to TRAF3 stabilization and type I interferon production. Ubiquitinated at Lys-329 by the SCF(FBXL2) complex, leading to its degradation by the proteasome. 'Lys-63'-linked ubiquitination by FBXO11 in a NEDD8-dependent manner promotes the amplification of IFN-I signaling. Post-translationally, (Microbial infection) Cleaved by enterovirus D68 protease 2A; leading to inhibition of NF-kappa-B or IFN-beta triggered by TRAF3.

The protein resides in the cytoplasm. Its subcellular location is the endosome. It localises to the mitochondrion. The catalysed reaction is S-ubiquitinyl-[E2 ubiquitin-conjugating enzyme]-L-cysteine + [acceptor protein]-L-lysine = [E2 ubiquitin-conjugating enzyme]-L-cysteine + N(6)-ubiquitinyl-[acceptor protein]-L-lysine.. Its function is as follows. Cytoplasmic E3 ubiquitin ligase that regulates various signaling pathways, such as the NF-kappa-B, mitogen-activated protein kinase (MAPK) and interferon regulatory factor (IRF) pathways, and thus controls a lot of biological processes in both immune and non-immune cell types. In TLR and RLR signaling pathways, acts as an E3 ubiquitin ligase promoting the synthesis of 'Lys-63'-linked polyubiquitin chains on several substrates such as ASC that lead to the activation of the type I interferon response or the inflammasome. Following the activation of certain TLRs such as TLR4, acts as a negative NF-kappa-B regulator, possibly to avoid unregulated inflammatory response, and its degradation via 'Lys-48'-linked polyubiquitination is required for MAPK activation and production of inflammatory cytokines. Alternatively, when TLR4 orchestrates bacterial expulsion, TRAF3 undergoes 'Lys-33'-linked polyubiquitination and subsequently binds to RALGDS, mobilizing the exocyst complex to rapidly expel intracellular bacteria back for clearance. Also acts as a constitutive negative regulator of the alternative NF-kappa-B pathway, which controls B-cell survival and lymphoid organ development. Required for normal antibody isotype switching from IgM to IgG. Plays a role T-cell dependent immune responses. Down-regulates proteolytic processing of NFKB2, and thereby inhibits non-canonical activation of NF-kappa-B. Promotes ubiquitination and proteasomal degradation of MAP3K14. The protein is TNF receptor-associated factor 3 of Homo sapiens (Human).